The sequence spans 78 residues: Probable [Fe-S]-dependent transcriptional repressor (78 aa).

Iron-sulfur cluster contacts are provided by Cys56, Cys61, Cys64, and Cys70.

It belongs to the FeoC family.

May function as a transcriptional regulator that controls feoABC expression. The sequence is that of Probable [Fe-S]-dependent transcriptional repressor from Escherichia fergusonii (strain ATCC 35469 / DSM 13698 / CCUG 18766 / IAM 14443 / JCM 21226 / LMG 7866 / NBRC 102419 / NCTC 12128 / CDC 0568-73).